Reading from the N-terminus, the 135-residue chain is Transcription antitermination protein NusB (135 aa).

The protein belongs to the NusB family.

Involved in transcription antitermination. Required for transcription of ribosomal RNA (rRNA) genes. Binds specifically to the boxA antiterminator sequence of the ribosomal RNA (rrn) operons. This Shewanella pealeana (strain ATCC 700345 / ANG-SQ1) protein is Transcription antitermination protein NusB.